The following is a 205-amino-acid chain: Urease accessory protein UreG (205 aa).

10-17 (GPVGAGKT) contributes to the GTP binding site.

This sequence belongs to the SIMIBI class G3E GTPase family. UreG subfamily. As to quaternary structure, homodimer. UreD, UreF and UreG form a complex that acts as a GTP-hydrolysis-dependent molecular chaperone, activating the urease apoprotein by helping to assemble the nickel containing metallocenter of UreC. The UreE protein probably delivers the nickel.

It localises to the cytoplasm. Functionally, facilitates the functional incorporation of the urease nickel metallocenter. This process requires GTP hydrolysis, probably effectuated by UreG. This Corynebacterium glutamicum (strain R) protein is Urease accessory protein UreG.